The chain runs to 97 residues: U6-theraphotoxin-Hhn1a 3 (97 aa).

The N-terminal stretch at 1-33 (MLIKQFSRRSKNTKVQILLAFAALFVLAVGSYA) is a signal peptide. A propeptide spanning residues 34–61 (SESKKLDLRDALFSAMFSADYQLNPQER) is cleaved from the precursor. 3 disulfides stabilise this stretch: cysteine 63–cysteine 77, cysteine 70–cysteine 82, and cysteine 76–cysteine 89.

Belongs to the neurotoxin 10 (Hwtx-1) family. 12 (Hntx-12) subfamily. Expressed by the venom gland.

The protein resides in the secreted. Ion channel inhibitor. This chain is U6-theraphotoxin-Hhn1a 3, found in Cyriopagopus hainanus (Chinese bird spider).